A 1303-amino-acid polypeptide reads, in one-letter code: Zinc finger CCCH domain-containing protein 4 (1303 aa).

The span at 1–33 shows a compositional bias: pro residues; that stretch reads MEAAPGTPPPPPSESPPPPSPPPPSTPSPPPCS. The tract at residues 1-388 is disordered; sequence MEAAPGTPPP…RDHDKPHQQS (388 aa). The segment covering 53 to 73 has biased composition (acidic residues); sequence DREDGELEEGELEDDGAEETQ. Phosphothreonine occurs at positions 72 and 75. 3 positions are modified to phosphoserine: serine 76, serine 92, and serine 94. Over residues 80–99 the composition is skewed to basic and acidic residues; that stretch reads ERSRKEKGEKHHSDSDEEKS. The stretch at 95 to 128 forms a coiled coil; that stretch reads DEEKSHRRLKRKRKKEREKEKRRSKKRRKSKHKR. Over residues 100–130 the composition is skewed to basic residues; sequence HRRLKRKRKKEREKEKRRSKKRRKSKHKRHA. A compositionally biased stretch (acidic residues) spans 135–144; that stretch reads DFSDFSDDSD. Residue tyrosine 155 is modified to Phosphotyrosine. The segment covering 194 to 218 has biased composition (acidic residues); the sequence is EDYENEQYGEYEGDEEEDMGKEDYD. Positions 219–235 are enriched in basic and acidic residues; the sequence is DFTKELNQYRRAKEGSS. The span at 238-251 shows a compositional bias: basic residues; the sequence is RGSRGRGRGYRGRG. Residues 252 to 274 are compositionally biased toward gly residues; that stretch reads SRGGSRGRGMGRGSRGRGRGSMG. The span at 278–304 shows a compositional bias: acidic residues; sequence PEDEEDFYEEEMDYGESEEPMGDDDYD. Residues 305-321 show a composition bias toward basic and acidic residues; the sequence is EYSKELNQYRRSKDSRG. Basic residues predominate over residues 323 to 346; it reads GLSRGRGRGSRGRGKGMGRGRGRG. Positions 358 to 369 are enriched in acidic residues; the sequence is NDDEDFYDEDMG. Positions 377 to 388 are enriched in basic and acidic residues; that stretch reads RSRDHDKPHQQS. 3 C3H1-type zinc fingers span residues 390-417, 419-446, and 447-470; these read KKGK…HDIE, PKKR…HGDF, and PCKL…HDPL. A compositionally biased stretch (acidic residues) spans 486-496; that stretch reads AEAGAEDEKEV. A disordered region spans residues 486–571; the sequence is AEAGAEDEKE…HEPLSPQQLQ (86 aa). Composition is skewed to pro residues over residues 507-529 and 539-558; these read LPKP…PQAP and GGPP…PQMP. Asymmetric dimethylarginine is present on arginine 601. Over residues 605–624 the composition is skewed to pro residues; it reads PGGPPGPMGPGPNMGPPGPM. 3 disordered regions span residues 605–685, 710–955, and 996–1288; these read PGGP…SGMM, GLLG…PRSQ, and PPVP…ASLK. A compositionally biased stretch (basic and acidic residues) spans 630-650; it reads PDMHPDMHPDMHPDMHADMHA. Residues 659–673 show a composition bias toward pro residues; that stretch reads NPGPPMGPGGPPMMP. Basic and acidic residues-rich tracts occupy residues 717–739 and 782–795; these read DYGH…HPLE and ERAR…KQDR. The stretch at 767–800 forms a coiled coil; that stretch reads RALYLRIQQKQQEEEERARRLAESSKQDRENEEG. Residues serine 807 and serine 808 each carry the phosphoserine modification. The segment covering 815-843 has biased composition (polar residues); it reads SSVTSILKTLRQQTSSRPPASVGELSSSG. The segment covering 860-875 has biased composition (basic and acidic residues); the sequence is ADPRLSRDPRLTRHVE. Phosphoserine occurs at positions 904, 907, and 908. Residues 904-918 show a composition bias toward low complexity; the sequence is SLHSSPVGPSSSKGS. Composition is skewed to polar residues over residues 1028 to 1038 and 1053 to 1062; these read GASTDSSTQGA and VNATGSSAAP. Positions 1067-1084 are enriched in basic and acidic residues; that stretch reads KPSDPRVRKAPTDPRLQK. A compositionally biased stretch (low complexity) spans 1097-1110; that stretch reads PGPAEAPSPTASPS. Serine 1104 bears the Phosphoserine mark. At threonine 1106 the chain carries Phosphothreonine. 3 positions are modified to phosphoserine: serine 1108, serine 1110, and serine 1114. Residue threonine 1118 is modified to Phosphothreonine. The span at 1129-1139 shows a compositional bias: gly residues; that stretch reads GGLGQGGGGGQ. Residues 1224–1234 are compositionally biased toward low complexity; that stretch reads KAAAAPAATTA. Residues 1235–1245 are compositionally biased toward pro residues; the sequence is TPPPEGAPPQP. Residues 1259 to 1268 show a composition bias toward polar residues; sequence VKQTPKTGSG. A phosphoserine mark is found at serine 1269 and serine 1275.

The protein belongs to the suppressor of sable family. As to quaternary structure, interacts with WDR82.

The protein resides in the chromosome. In terms of biological role, RNA-binding protein that suppresses transcription of long non-coding RNAs (lncRNAs). LncRNAs are defined as transcripts more than 200 nucleotides that are not translated into protein. Together with WDR82, part of a transcription termination checkpoint that promotes transcription termination of lncRNAs and their subsequent degradation by the exosome. The transcription termination checkpoint is activated by the inefficiently spliced first exon of lncRNAs. This Homo sapiens (Human) protein is Zinc finger CCCH domain-containing protein 4.